The following is a 538-amino-acid chain: Frizzled-4 (538 aa).

A signal peptide spans 1 to 37 (MAWQGTGPSVRGMPGGVRLRLGLLLLQLLLLQRPALG). At 38-213 (FGDEEERRCD…KCGYDAGLYS (176 aa)) the chain is on the extracellular side. One can recognise an FZ domain in the interval 41–162 (EEERRCDPIR…NDHNHMCMEG (122 aa)). 8 disulfide bridges follow: C46/C107, C54/C100, C91/C129, C118/C159, C122/C146, C182/C201, C205/C283, and C303/C378. N-linked (GlcNAc...) asparagine glycosylation is present at N60. Residue N145 is glycosylated (N-linked (GlcNAc...) asparagine). Residues 214 to 244 (RSAKEFTDIWMAVWASLCFISTTFTVLTFLI) form a helical membrane-spanning segment. Topologically, residues 245–250 (DSSRFS) are cytoplasmic. The chain crosses the membrane as a helical span at residues 251-276 (YPERPIIFLSMCYNIYSIAYIVRLTV). Topologically, residues 277-300 (GRERISCDFEEAAEPVLIQEGLKN) are extracellular. A helical membrane pass occupies residues 301–334 (TGCAIIFLLMYFFGMASSIWWVILTLTWFLAAGL). The Cytoplasmic portion of the chain corresponds to 335–337 (KWG). The chain crosses the membrane as a helical span at residues 338 to 366 (HEAIEMHSSYFHIAAWAIPAVKTIVILIM). Over 367-384 (RLVDADELTGLCYVGNQS) the chain is Extracellular. Residue N382 is glycosylated (N-linked (GlcNAc...) asparagine). Residues 385 to 419 (LDALTGFVVAPLFTYLVIGTLFIAAGLVALFKIRS) traverse the membrane as a helical segment. At 420–432 (NLQKDGTKTDKLE) the chain is on the cytoplasmic side. Residues 433-461 (RLMVKIGVFSVLYTVPATCVIACYFYEIS) traverse the membrane as a helical segment. Over 462-474 (NWALFRYSADDSN) the chain is Extracellular. The chain crosses the membrane as a helical span at residues 475-496 (MAVEMLKIFMSLLVGITSGMWI). Residues 497–538 (WSAKTLHTWQKCSNRLVNSGKVKREKRGNGWVKPGKGNETVV) lie on the Cytoplasmic side of the membrane. The short motif at 500-505 (KTLHTW) is the Lys-Thr-X-X-X-Trp motif, mediates interaction with the PDZ domain of Dvl family members element. The short motif at 536-538 (TVV) is the PDZ-binding element.

It belongs to the G-protein coupled receptor Fz/Smo family. In terms of assembly, interacts with MAGI3 and NDP. Component of a complex, at least composed of TSPAN12, FZD4 and norrin (NDP). Interacts (via FZ domain) with TSKU; TSKU competes with WNT2B for binding to FZD4, inhibiting Wnt signaling and repressing peripheral eye development. Interacts with glypican GPC3. Ubiquitinated by ZNRF3, leading to its degradation by the proteasome.

The protein localises to the cell membrane. In terms of biological role, receptor for Wnt proteins. Most of frizzled receptors are coupled to the beta-catenin (CTNNB1) canonical signaling pathway, which leads to the activation of disheveled proteins, inhibition of GSK-3 kinase, nuclear accumulation of beta-catenin (CTNNB1) and activation of Wnt target genes. Plays a critical role in retinal vascularization by acting as a receptor for Wnt proteins and norrin (NDP). In retina, it can be both activated by Wnt protein-binding, but also by a Wnt-independent signaling via binding of norrin (NDP), promoting in both cases beta-catenin (CTNNB1) accumulation and stimulation of LEF/TCF-mediated transcriptional programs. A second signaling pathway involving PKC and calcium fluxes has been seen for some family members, but it is not yet clear if it represents a distinct pathway or if it can be integrated in the canonical pathway, as PKC seems to be required for Wnt-mediated inactivation of GSK-3 kinase. Both pathways seem to involve interactions with G-proteins. May be involved in transduction and intercellular transmission of polarity information during tissue morphogenesis and/or in differentiated tissues. This Rattus norvegicus (Rat) protein is Frizzled-4 (Fzd4).